The chain runs to 112 residues: UPF0145 protein LAF_1635 (112 aa).

Belongs to the UPF0145 family.

The protein is UPF0145 protein LAF_1635 of Limosilactobacillus fermentum (strain NBRC 3956 / LMG 18251) (Lactobacillus fermentum).